A 270-amino-acid chain; its full sequence is Putative pyruvate, phosphate dikinase regulatory protein (270 aa).

150-157 (GPSRTSKS) contributes to the ADP binding site.

The protein belongs to the pyruvate, phosphate/water dikinase regulatory protein family. PDRP subfamily.

It catalyses the reaction N(tele)-phospho-L-histidyl/L-threonyl-[pyruvate, phosphate dikinase] + ADP = N(tele)-phospho-L-histidyl/O-phospho-L-threonyl-[pyruvate, phosphate dikinase] + AMP + H(+). It carries out the reaction N(tele)-phospho-L-histidyl/O-phospho-L-threonyl-[pyruvate, phosphate dikinase] + phosphate + H(+) = N(tele)-phospho-L-histidyl/L-threonyl-[pyruvate, phosphate dikinase] + diphosphate. In terms of biological role, bifunctional serine/threonine kinase and phosphorylase involved in the regulation of the pyruvate, phosphate dikinase (PPDK) by catalyzing its phosphorylation/dephosphorylation. This chain is Putative pyruvate, phosphate dikinase regulatory protein, found in Neorickettsia sennetsu (strain ATCC VR-367 / Miyayama) (Ehrlichia sennetsu).